A 319-amino-acid polypeptide reads, in one-letter code: Malate dehydrogenase (319 aa).

Residues 10 to 15 (GAGQIG) and aspartate 34 each bind NAD(+). Residues arginine 85 and arginine 91 each contribute to the substrate site. Residues asparagine 98 and 121–123 (ITN) each bind NAD(+). The substrate site is built by asparagine 123 and arginine 154. Histidine 178 serves as the catalytic Proton acceptor.

This sequence belongs to the LDH/MDH superfamily. MDH type 3 family.

It catalyses the reaction (S)-malate + NAD(+) = oxaloacetate + NADH + H(+). Its function is as follows. Catalyzes the reversible oxidation of malate to oxaloacetate. The chain is Malate dehydrogenase from Rhodospirillum centenum (strain ATCC 51521 / SW).